Here is a 342-residue protein sequence, read N- to C-terminus: Ribosomal RNA small subunit methyltransferase C (342 aa).

This sequence belongs to the methyltransferase superfamily. RsmC family. In terms of assembly, monomer.

It is found in the cytoplasm. It catalyses the reaction guanosine(1207) in 16S rRNA + S-adenosyl-L-methionine = N(2)-methylguanosine(1207) in 16S rRNA + S-adenosyl-L-homocysteine + H(+). In terms of biological role, specifically methylates the guanine in position 1207 of 16S rRNA in the 30S particle. This Klebsiella pneumoniae subsp. pneumoniae (strain ATCC 700721 / MGH 78578) protein is Ribosomal RNA small subunit methyltransferase C.